We begin with the raw amino-acid sequence, 158 residues long: NAD(P)H-quinone oxidoreductase subunit J, chloroplastic (158 aa).

It belongs to the complex I 30 kDa subunit family. As to quaternary structure, NDH is composed of at least 16 different subunits, 5 of which are encoded in the nucleus.

It localises to the plastid. It is found in the chloroplast thylakoid membrane. It catalyses the reaction a plastoquinone + NADH + (n+1) H(+)(in) = a plastoquinol + NAD(+) + n H(+)(out). The catalysed reaction is a plastoquinone + NADPH + (n+1) H(+)(in) = a plastoquinol + NADP(+) + n H(+)(out). NDH shuttles electrons from NAD(P)H:plastoquinone, via FMN and iron-sulfur (Fe-S) centers, to quinones in the photosynthetic chain and possibly in a chloroplast respiratory chain. The immediate electron acceptor for the enzyme in this species is believed to be plastoquinone. Couples the redox reaction to proton translocation, and thus conserves the redox energy in a proton gradient. This Dioscorea elephantipes (Elephant's foot yam) protein is NAD(P)H-quinone oxidoreductase subunit J, chloroplastic.